Here is a 361-residue protein sequence, read N- to C-terminus: Homocitrate synthase (361 aa).

Positions 1 to 251 constitute a Pyruvate carboxyltransferase domain; sequence MVLDSTLREG…KYRLDLLYRV (251 aa). Arg-8 serves as a coordination point for 2-oxoglutarate. Glu-9 provides a ligand contact to Mg(2+). His-68, Arg-128, and Thr-162 together coordinate 2-oxoglutarate. Residues His-188 and His-190 each coordinate Mg(2+). The Proton acceptor role is filled by His-282.

It belongs to the alpha-IPM synthase/homocitrate synthase family. Homocitrate synthase LYS20/LYS21 subfamily. The cofactor is Mg(2+). It depends on Mn(2+) as a cofactor.

It carries out the reaction acetyl-CoA + 2-oxoglutarate + H2O = (2R)-homocitrate + CoA + H(+). It participates in amino-acid biosynthesis; L-lysine biosynthesis via AAA pathway; L-alpha-aminoadipate from 2-oxoglutarate: step 1/5. Catalyzes the aldol-type condensation of 2-oxoglutarate with acetyl-CoA to yield homocitrate. Carries out the first step of the alpha-aminoadipate (AAA) lysine biosynthesis pathway. The protein is Homocitrate synthase of Pyrococcus abyssi (strain GE5 / Orsay).